A 181-amino-acid chain; its full sequence is Inner membrane-spanning protein YciB (181 aa).

5 helical membrane-spanning segments follow: residues 10-30 (LIIF…GALI), 50-70 (MHLI…VFHD), 72-92 (AFIK…LGVS), 118-138 (VTWY…YVAF), and 148-168 (FKVF…VFYL).

It belongs to the YciB family.

The protein resides in the cell inner membrane. Plays a role in cell envelope biogenesis, maintenance of cell envelope integrity and membrane homeostasis. The sequence is that of Inner membrane-spanning protein YciB from Shewanella sp. (strain ANA-3).